Here is a 215-residue protein sequence, read N- to C-terminus: Chaperone protein TorD (215 aa).

This sequence belongs to the TorD/DmsD family. TorD subfamily.

Its subcellular location is the cytoplasm. Involved in the biogenesis of TorA. Acts on TorA before the insertion of the molybdenum cofactor and, as a result, probably favors a conformation of the apoenzyme that is competent for acquiring the cofactor. This Aliivibrio salmonicida (strain LFI1238) (Vibrio salmonicida (strain LFI1238)) protein is Chaperone protein TorD.